A 378-amino-acid polypeptide reads, in one-letter code: Cobalt-precorrin-5B C(1)-methyltransferase (378 aa).

It belongs to the CbiD family.

The enzyme catalyses Co-precorrin-5B + S-adenosyl-L-methionine = Co-precorrin-6A + S-adenosyl-L-homocysteine. Its pathway is cofactor biosynthesis; adenosylcobalamin biosynthesis; cob(II)yrinate a,c-diamide from sirohydrochlorin (anaerobic route): step 6/10. Its function is as follows. Catalyzes the methylation of C-1 in cobalt-precorrin-5B to form cobalt-precorrin-6A. The sequence is that of Cobalt-precorrin-5B C(1)-methyltransferase from Synechocystis sp. (strain ATCC 27184 / PCC 6803 / Kazusa).